The primary structure comprises 211 residues: Thiamine-phosphate synthase (211 aa).

Residues 37 to 41 (QLRIK) and Asn-69 each bind 4-amino-2-methyl-5-(diphosphooxymethyl)pyrimidine. The Mg(2+) site is built by Asp-70 and Asp-89. A 4-amino-2-methyl-5-(diphosphooxymethyl)pyrimidine-binding site is contributed by Ser-108. 2-[(2R,5Z)-2-carboxy-4-methylthiazol-5(2H)-ylidene]ethyl phosphate is bound at residue 134–136 (TQT). Lys-137 contacts 4-amino-2-methyl-5-(diphosphooxymethyl)pyrimidine. Residues Gly-166 and 186–187 (VS) contribute to the 2-[(2R,5Z)-2-carboxy-4-methylthiazol-5(2H)-ylidene]ethyl phosphate site.

This sequence belongs to the thiamine-phosphate synthase family. It depends on Mg(2+) as a cofactor.

The enzyme catalyses 2-[(2R,5Z)-2-carboxy-4-methylthiazol-5(2H)-ylidene]ethyl phosphate + 4-amino-2-methyl-5-(diphosphooxymethyl)pyrimidine + 2 H(+) = thiamine phosphate + CO2 + diphosphate. It catalyses the reaction 2-(2-carboxy-4-methylthiazol-5-yl)ethyl phosphate + 4-amino-2-methyl-5-(diphosphooxymethyl)pyrimidine + 2 H(+) = thiamine phosphate + CO2 + diphosphate. It carries out the reaction 4-methyl-5-(2-phosphooxyethyl)-thiazole + 4-amino-2-methyl-5-(diphosphooxymethyl)pyrimidine + H(+) = thiamine phosphate + diphosphate. The protein operates within cofactor biosynthesis; thiamine diphosphate biosynthesis; thiamine phosphate from 4-amino-2-methyl-5-diphosphomethylpyrimidine and 4-methyl-5-(2-phosphoethyl)-thiazole: step 1/1. In terms of biological role, condenses 4-methyl-5-(beta-hydroxyethyl)thiazole monophosphate (THZ-P) and 2-methyl-4-amino-5-hydroxymethyl pyrimidine pyrophosphate (HMP-PP) to form thiamine monophosphate (TMP). This chain is Thiamine-phosphate synthase, found in Escherichia coli O1:K1 / APEC.